A 697-amino-acid chain; its full sequence is Potassium-transporting ATPase ATP-binding subunit (697 aa).

Transmembrane regions (helical) follow at residues 55 to 75 (PIMFVVEIGFIITFILSFLPS), 82 to 102 (GWFNITVSFILLFTVLFANFA), 245 to 265 (LTFIFLIVVVTLPIFTNYLGF), and 271 to 291 (VLVALLVCLIPTTIGGLLSAI). The active-site 4-aspartylphosphate intermediate is aspartate 324. Residues aspartate 361, glutamate 365, 393–400 (FKAETRMS), and lysine 412 contribute to the ATP site. Mg(2+)-binding residues include aspartate 535 and aspartate 539. Helical transmembrane passes span 605–625 (FAIIPAMFTLAIPQMEALNIM), 633–653 (AILSALLFNAVIIPLLIPLAM), and 677–697 (GGVIVPFIGIKVIDMIVGLFI).

Belongs to the cation transport ATPase (P-type) (TC 3.A.3) family. Type IA subfamily. In terms of assembly, the system is composed of three essential subunits: KdpA, KdpB and KdpC.

It localises to the cell membrane. It carries out the reaction K(+)(out) + ATP + H2O = K(+)(in) + ADP + phosphate + H(+). Functionally, part of the high-affinity ATP-driven potassium transport (or Kdp) system, which catalyzes the hydrolysis of ATP coupled with the electrogenic transport of potassium into the cytoplasm. This subunit is responsible for energy coupling to the transport system and for the release of the potassium ions to the cytoplasm. In Bacillus cereus (strain AH187), this protein is Potassium-transporting ATPase ATP-binding subunit.